The primary structure comprises 302 residues: Bifunctional protein FolD (302 aa).

NADP(+) is bound by residues 168 to 170 (GRS), T197, and V238.

It belongs to the tetrahydrofolate dehydrogenase/cyclohydrolase family. Homodimer.

It carries out the reaction (6R)-5,10-methylene-5,6,7,8-tetrahydrofolate + NADP(+) = (6R)-5,10-methenyltetrahydrofolate + NADPH. It catalyses the reaction (6R)-5,10-methenyltetrahydrofolate + H2O = (6R)-10-formyltetrahydrofolate + H(+). It participates in one-carbon metabolism; tetrahydrofolate interconversion. Catalyzes the oxidation of 5,10-methylenetetrahydrofolate to 5,10-methenyltetrahydrofolate and then the hydrolysis of 5,10-methenyltetrahydrofolate to 10-formyltetrahydrofolate. In Desulfatibacillum aliphaticivorans, this protein is Bifunctional protein FolD.